Here is a 425-residue protein sequence, read N- to C-terminus: AP-3 complex subunit mu (425 aa).

The MHD domain maps to 175 to 423; that stretch reads TNEFFIHVLE…TIIAQNVSFR (249 aa).

This sequence belongs to the adaptor complexes medium subunit family.

The protein localises to the cytoplasm. The protein resides in the cytoskeleton. It is found in the microtubule organizing center. Its subcellular location is the spindle pole body. It localises to the membrane. The protein localises to the golgi apparatus. The protein resides in the cytoplasmic vesicle membrane. In terms of biological role, part of the AP-3 complex, an adaptor-related complex which is not clathrin-associated. The complex is associated with the Golgi region as well as more peripheral structures. It facilitates the budding of vesicles from the Golgi membrane and may be directly involved in trafficking to the vacuole. This chain is AP-3 complex subunit mu (apm3), found in Schizosaccharomyces pombe (strain 972 / ATCC 24843) (Fission yeast).